We begin with the raw amino-acid sequence, 440 residues long: Transposon Ty1-GR1 Gag polyprotein (440 aa).

Residues Met1 to Ser16 are compositionally biased toward low complexity. Disordered regions lie at residues Met1–Gln93, Pro126–Pro173, and Gly352–Tyr440. Polar residues-rich tracts occupy residues Thr48 to Ser60, Ser71 to Gln93, and Gln127 to Phe152. Residues Thr153 to Thr165 show a composition bias toward low complexity. The interval Asn299 to His401 is RNA-binding. Low complexity predominate over residues Asn402–Ser418. Ser416 is modified (phosphoserine). Residues Lys419–Asn428 show a composition bias toward polar residues. Residues Asn429–Tyr440 are compositionally biased toward basic and acidic residues.

In terms of assembly, homotrimer.

It localises to the cytoplasm. In terms of biological role, capsid protein (CA) is the structural component of the virus-like particle (VLP), forming the shell that encapsulates the retrotransposons dimeric RNA genome. The particles are assembled from trimer-clustered units and there are holes in the capsid shells that allow for the diffusion of macromolecules. CA also has nucleocapsid-like chaperone activity, promoting primer tRNA(i)-Met annealing to the multipartite primer-binding site (PBS), dimerization of Ty1 RNA and initiation of reverse transcription. The polypeptide is Transposon Ty1-GR1 Gag polyprotein (TY1A-GR1) (Saccharomyces cerevisiae (strain ATCC 204508 / S288c) (Baker's yeast)).